The sequence spans 189 residues: GTP cyclohydrolase 1 (189 aa).

Residues cysteine 78, histidine 81, and cysteine 150 each contribute to the Zn(2+) site.

The protein belongs to the GTP cyclohydrolase I family. In terms of assembly, toroid-shaped homodecamer, composed of two pentamers of five dimers.

It catalyses the reaction GTP + H2O = 7,8-dihydroneopterin 3'-triphosphate + formate + H(+). It participates in cofactor biosynthesis; 7,8-dihydroneopterin triphosphate biosynthesis; 7,8-dihydroneopterin triphosphate from GTP: step 1/1. This chain is GTP cyclohydrolase 1, found in Listeria welshimeri serovar 6b (strain ATCC 35897 / DSM 20650 / CCUG 15529 / CIP 8149 / NCTC 11857 / SLCC 5334 / V8).